The chain runs to 451 residues: Glucose-6-phosphate isomerase (451 aa).

Phosphothreonine is present on Thr-38. The active-site Proton donor is the Glu-290. Active-site residues include His-311 and Lys-425.

Belongs to the GPI family.

It is found in the cytoplasm. It catalyses the reaction alpha-D-glucose 6-phosphate = beta-D-fructose 6-phosphate. Its pathway is carbohydrate biosynthesis; gluconeogenesis. It functions in the pathway carbohydrate degradation; glycolysis; D-glyceraldehyde 3-phosphate and glycerone phosphate from D-glucose: step 2/4. Its function is as follows. Catalyzes the reversible isomerization of glucose-6-phosphate to fructose-6-phosphate. The sequence is that of Glucose-6-phosphate isomerase from Shouchella clausii (strain KSM-K16) (Alkalihalobacillus clausii).